A 184-amino-acid chain; its full sequence is UPF0149 protein PSPA7_5968 (184 aa).

It belongs to the UPF0149 family.

This chain is UPF0149 protein PSPA7_5968, found in Pseudomonas paraeruginosa (strain DSM 24068 / PA7) (Pseudomonas aeruginosa (strain PA7)).